A 758-amino-acid polypeptide reads, in one-letter code: Calpain (758 aa).

In terms of domain architecture, Calpain catalytic spans 99-397; sequence LWEDPDFPAN…FSRVEVCHLG (299 aa). Active-site residues include Cys154, His313, and Asn337. Positions 398 to 562 are domain III; sequence LESLEYNQNF…TSITEQELDE (165 aa). Residues 563–582 form a linker region; that stretch reads DNTNQGLPDDVIEALKLEDT. Residues 583–757 form a domain IV region; the sequence is LLDEDQEIEQ…AEDYLRFSVY (175 aa). The Ca(2+) site is built by Asp641, Asn643, Thr645, His647, Glu652, Asp671, Asp673, Ser675, Tyr677, and Glu682. EF-hand domains lie at 658-693 and 694-729; these read IQAK…AGYH and VSNR…LKTA.

Belongs to the peptidase C2 family.

Activated by free cytoplasmic calcium. Its function is as follows. Calpains are calcium-activated non-lysosomal thiol-proteases. This is Calpain from Schistosoma mansoni (Blood fluke).